Here is a 72-residue protein sequence, read N- to C-terminus: Translation initiation factor IF-1 (72 aa).

The S1-like domain occupies 1–72 (MAKEEAITVD…SKGRITYRKK (72 aa)).

It belongs to the IF-1 family. In terms of assembly, component of the 30S ribosomal translation pre-initiation complex which assembles on the 30S ribosome in the order IF-2 and IF-3, IF-1 and N-formylmethionyl-tRNA(fMet); mRNA recruitment can occur at any time during PIC assembly.

The protein resides in the cytoplasm. One of the essential components for the initiation of protein synthesis. Stabilizes the binding of IF-2 and IF-3 on the 30S subunit to which N-formylmethionyl-tRNA(fMet) subsequently binds. Helps modulate mRNA selection, yielding the 30S pre-initiation complex (PIC). Upon addition of the 50S ribosomal subunit IF-1, IF-2 and IF-3 are released leaving the mature 70S translation initiation complex. This chain is Translation initiation factor IF-1, found in Leptospira borgpetersenii serovar Hardjo-bovis (strain L550).